A 99-amino-acid chain; its full sequence is UPF0729 protein CG18508 (99 aa).

Residues 60-99 form a disordered region; the sequence is PGGKKTENVSDDDAEESENPPLNATAMAAETEVDESKKEI. A compositionally biased stretch (acidic residues) spans 68-77; sequence VSDDDAEESE. Serine 69 bears the Phosphoserine mark.

Belongs to the UPF0729 family.

The polypeptide is UPF0729 protein CG18508 (Drosophila melanogaster (Fruit fly)).